The following is a 409-amino-acid chain: MKFILPLFTSLPVALAWLPGIDKDIYSAAGTNIFNVTSASSKRWLPASKKIRGVNLGSHFVIEPWMASMAWSNMGCSGQRSEFDCVMALGQETADQAFADHWGSWITQDDINQMVQYGLNTIRIPVGYWLKEDLVYADSEHFPKGGIGYLEDVCGWASDAGMYIIIDLHGAPGAQQPKQPFTGQYAPNPGFYQDYQYDRALEFLEWMTTSIHQNNKFRNVGMLEIVNEPVQNADQASSMINSYYPSAFTRIRNTESSLGITSNNYLHIQMMNEKWGSGDPTQSLTDNYFAAYDDHRYVKWDSSVAVDKESYISASCVDDRGGNWPTIVGEWSLSVPDNVEHTADWEPSSNTDFYARWFAAQAIAYEKQEGWVFWSWKAQLGDYRWSYKDAVDAGVIPKDLDSIYDYSPC.

The signal sequence occupies residues 1-16 (MKFILPLFTSLPVALA). N-linked (GlcNAc...) asparagine glycosylation occurs at Asn35. The active-site Proton donor is the Glu228. The active-site Nucleophile is Glu330.

It belongs to the glycosyl hydrolase 5 (cellulase A) family.

It localises to the secreted. It catalyses the reaction Random hydrolysis of (1-&gt;6)-linkages in (1-&gt;6)-beta-D-glucans.. Functionally, beta-glucanases participate in the metabolism of beta-glucan, the main structural component of the cell wall. Acts on lutean, pustulan and 1,6-oligo-beta-D-glucosides. The polypeptide is Glucan endo-1,6-beta-glucosidase B (exgB) (Emericella nidulans (strain FGSC A4 / ATCC 38163 / CBS 112.46 / NRRL 194 / M139) (Aspergillus nidulans)).